The chain runs to 487 residues: Malonate-semialdehyde dehydrogenase (487 aa).

NAD(+)-binding residues include alanine 150, phenylalanine 152, lysine 176, glutamate 179, arginine 180, serine 229, and threonine 251. Residue cysteine 284 is the Nucleophile of the active site. Residue glutamate 382 coordinates NAD(+).

This sequence belongs to the aldehyde dehydrogenase family. IolA subfamily. As to quaternary structure, homotetramer.

It catalyses the reaction 3-oxopropanoate + NAD(+) + CoA + H2O = hydrogencarbonate + acetyl-CoA + NADH + H(+). The catalysed reaction is 2-methyl-3-oxopropanoate + NAD(+) + CoA + H2O = propanoyl-CoA + hydrogencarbonate + NADH + H(+). It participates in polyol metabolism; myo-inositol degradation into acetyl-CoA; acetyl-CoA from myo-inositol: step 7/7. In terms of biological role, catalyzes the oxidation of malonate semialdehyde (MSA) and methylmalonate semialdehyde (MMSA) into acetyl-CoA and propanoyl-CoA, respectively. Is involved in a myo-inositol catabolic pathway. Bicarbonate, and not CO2, is the end-product of the enzymatic reaction. The chain is Malonate-semialdehyde dehydrogenase from Bacillus subtilis (strain 168).